Consider the following 531-residue polypeptide: Berberine bridge enzyme-like 9 (531 aa).

A signal peptide spans 1 to 23; that stretch reads MTSLTTQTLIITIFLLTIPTSFA. Cysteine 35 and cysteine 99 form a disulfide bridge. 7 N-linked (GlcNAc...) asparagine glycosylation sites follow: asparagine 76, asparagine 164, asparagine 271, asparagine 300, asparagine 314, asparagine 400, and asparagine 485. The FAD-binding PCMH-type domain occupies 77–252; it reads MTRKPVAIVA…LAWKIKLVPV (176 aa). The segment at residues 114-177 is a cross-link (6-(S-cysteinyl)-8alpha-(pros-histidyl)-FAD (His-Cys)); it reads HDYDGMSYLS…DLRGFPAGIC (64 aa).

It belongs to the oxygen-dependent FAD-linked oxidoreductase family. It depends on FAD as a cofactor. The FAD cofactor is bound via a bicovalent 6-S-cysteinyl, 8alpha-N1-histidyl FAD linkage. In terms of tissue distribution, accumulates in cell walls of etiolated hypocotyls.

It localises to the secreted. It is found in the cell wall. The sequence is that of Berberine bridge enzyme-like 9 from Arabidopsis thaliana (Mouse-ear cress).